Reading from the N-terminus, the 188-residue chain is HTH-type transcriptional regulator QacR (188 aa).

Residues 1 to 61 (MNLKDKILGV…EILNIEESKW (61 aa)) form the HTH tetR-type domain. The H-T-H motif DNA-binding region spans 24–43 (TTGEIVKLSESSKGNLYYHF).

As to quaternary structure, homodimer. Binds cooperatively to DNA as a pair of dimers.

Functionally, transcriptional repressor of qacA. Binds to IR1, an unusually long 28 bp operator, which is located downstream from the qacA promoter and overlaps its transcription start site. QacR is induced from its IR1 site by binding to one of many structurally dissimilar cationic lipophilic compounds, which are also substrates of QacA. The polypeptide is HTH-type transcriptional regulator QacR (qacR) (Staphylococcus aureus (strain Mu50 / ATCC 700699)).